The primary structure comprises 344 residues: 5,10-methenyltetrahydromethanopterin hydrogenase (344 aa).

The protein belongs to the HMD family. In terms of assembly, homotetramer.

The enzyme catalyses 5,10-methenyl-5,6,7,8-tetrahydromethanopterin + H2 = 5,10-methylenetetrahydromethanopterin + H(+). It participates in one-carbon metabolism; methanogenesis from CO(2); 5,10-methylene-5,6,7,8-tetrahydromethanopterin from 5,10-methenyl-5,6,7,8-tetrahydromethanopterin (hydrogen route): step 1/1. With respect to regulation, activity requires salt; 100 mM sodium or potassium salts of chloride, phosphate or sulfate are equally effective. Inactivated by O(2). Functionally, catalyzes the reversible reduction of methenyl-H(4)MPT(+) to methylene-H(4)MPT. The chain is 5,10-methenyltetrahydromethanopterin hydrogenase from Methanothermobacter marburgensis (strain ATCC BAA-927 / DSM 2133 / JCM 14651 / NBRC 100331 / OCM 82 / Marburg) (Methanobacterium thermoautotrophicum).